Here is a 683-residue protein sequence, read N- to C-terminus: 1,4-alpha-glucan-branching enzyme (683 aa).

Residues Trp92 and Lys127 each contribute to the (1,4-alpha-D-glucosyl)n site. Asp342 serves as the catalytic Nucleophile. The active-site Proton donor is the Glu397.

Belongs to the glycosyl hydrolase 13 family. GlgB subfamily.

The protein resides in the cytoplasm. The catalysed reaction is Transfers a segment of a (1-&gt;4)-alpha-D-glucan chain to a primary hydroxy group in a similar glucan chain.. It participates in glycan biosynthesis; glycogen biosynthesis. In terms of biological role, glycogen-branching enzyme participates in the glycogen biosynthetic process along with glycogenin and glycogen synthase. Generates alpha-1,6-glucosidic branches from alpha-1,4-linked glucose chains, to increase solubility of the glycogen polymer. In Rhizophagus irregularis (strain DAOM 181602 / DAOM 197198 / MUCL 43194) (Arbuscular mycorrhizal fungus), this protein is 1,4-alpha-glucan-branching enzyme (GLC3).